Consider the following 354-residue polypeptide: Uroporphyrinogen decarboxylase (354 aa).

Substrate is bound by residues 30 to 34 (RQAGR), D79, Y154, S209, and H333.

Belongs to the uroporphyrinogen decarboxylase family. In terms of assembly, homodimer.

It localises to the cytoplasm. The catalysed reaction is uroporphyrinogen III + 4 H(+) = coproporphyrinogen III + 4 CO2. The protein operates within porphyrin-containing compound metabolism; protoporphyrin-IX biosynthesis; coproporphyrinogen-III from 5-aminolevulinate: step 4/4. Catalyzes the decarboxylation of four acetate groups of uroporphyrinogen-III to yield coproporphyrinogen-III. The protein is Uroporphyrinogen decarboxylase of Mycobacterium sp. (strain JLS).